Here is a 394-residue protein sequence, read N- to C-terminus: tRNA-specific 2-thiouridylase MnmA (394 aa).

ATP-binding positions include 30-37 and Leu-56; that span reads AMSGGVDS. Cys-124 acts as the Nucleophile in catalysis. A disulfide bond links Cys-124 and Cys-220. Gly-148 lines the ATP pocket. The interval 170 to 172 is interaction with tRNA; sequence RDQ. The active-site Cysteine persulfide intermediate is Cys-220.

This sequence belongs to the MnmA/TRMU family.

It localises to the cytoplasm. It carries out the reaction S-sulfanyl-L-cysteinyl-[protein] + uridine(34) in tRNA + AH2 + ATP = 2-thiouridine(34) in tRNA + L-cysteinyl-[protein] + A + AMP + diphosphate + H(+). In terms of biological role, catalyzes the 2-thiolation of uridine at the wobble position (U34) of tRNA, leading to the formation of s(2)U34. The sequence is that of tRNA-specific 2-thiouridylase MnmA from Hyphomonas neptunium (strain ATCC 15444).